Consider the following 202-residue polypeptide: NADH-quinone oxidoreductase subunit C (202 aa).

It belongs to the complex I 30 kDa subunit family. As to quaternary structure, NDH-1 is composed of 14 different subunits. Subunits NuoB, C, D, E, F, and G constitute the peripheral sector of the complex.

It localises to the cell inner membrane. The enzyme catalyses a quinone + NADH + 5 H(+)(in) = a quinol + NAD(+) + 4 H(+)(out). Its function is as follows. NDH-1 shuttles electrons from NADH, via FMN and iron-sulfur (Fe-S) centers, to quinones in the respiratory chain. The immediate electron acceptor for the enzyme in this species is believed to be ubiquinone. Couples the redox reaction to proton translocation (for every two electrons transferred, four hydrogen ions are translocated across the cytoplasmic membrane), and thus conserves the redox energy in a proton gradient. This chain is NADH-quinone oxidoreductase subunit C, found in Bartonella quintana (strain Toulouse) (Rochalimaea quintana).